The primary structure comprises 199 residues: MIQISDTAKSHFLKLIQREGVPGMGVRLSAVDPGTPRADARLEFADPSELVGDEWLIDCGDFTLYVASASVAWLDGAEIDYVTQATGSQQLIIKAPKIKGQELSQVASLVERVCWVVENEINPQLASHGGRVEVQEVSAEGVVLLRFGGGCHGCGMADVTLKQGVEKTLMERVHGVIAVRDATDHSTGAAPYISRDFSP.

The [4Fe-4S] cluster site is built by Cys151 and Cys154.

It belongs to the NfuA family. Homodimer. [4Fe-4S] cluster is required as a cofactor.

In terms of biological role, involved in iron-sulfur cluster biogenesis. Binds a 4Fe-4S cluster, can transfer this cluster to apoproteins, and thereby intervenes in the maturation of Fe/S proteins. Could also act as a scaffold/chaperone for damaged Fe/S proteins. The polypeptide is Fe/S biogenesis protein NfuA (Xylella fastidiosa (strain M12)).